Consider the following 300-residue polypeptide: MDLPPQLSFALYVAAFALGFPLNVLAIRGARAHARRRLTPSLVYALNLGCSDLLLTVSLPLKAVEALASGAWPLPASLCPVFGVAHFAPLYAGGGFLAALSAGRYLGAAFPLGYQAFRRPCYSWGVCAAIWALVLCHLGLVFVLEAPGGWLDHSNTSLGINTPVNGSPVCLEAWDPASAGPARFSLSLLLFFLPLAITAFCYVGCLRALAHSGLTHRRKLRAAWVAGGALLTLLLCVGPYNASNVASFLNPNLGGSWRKLGLITGAWSVVLNPLVTGYLGRGPGLKTVCAARTQGSTSQK.

Topologically, residues 1 to 8 (MDLPPQLS) are extracellular. A helical membrane pass occupies residues 9 to 31 (FALYVAAFALGFPLNVLAIRGAR). At 32 to 41 (AHARRRLTPS) the chain is on the cytoplasmic side. Residues 42 to 64 (LVYALNLGCSDLLLTVSLPLKAV) form a helical membrane-spanning segment. At 65-79 (EALASGAWPLPASLC) the chain is on the extracellular side. Cysteine 79 and cysteine 170 are joined by a disulfide. Residues 80-101 (PVFGVAHFAPLYAGGGFLAALS) traverse the membrane as a helical segment. The Cytoplasmic segment spans residues 102-121 (AGRYLGAAFPLGYQAFRRPC). Residues 122-142 (YSWGVCAAIWALVLCHLGLVF) form a helical membrane-spanning segment. Residues 143–178 (VLEAPGGWLDHSNTSLGINTPVNGSPVCLEAWDPAS) are Extracellular-facing. An N-linked (GlcNAc...) asparagine glycan is attached at asparagine 155. A helical membrane pass occupies residues 179–200 (AGPARFSLSLLLFFLPLAITAF). The Cytoplasmic segment spans residues 201–223 (CYVGCLRALAHSGLTHRRKLRAA). A helical transmembrane segment spans residues 224–248 (WVAGGALLTLLLCVGPYNASNVASF). The Extracellular portion of the chain corresponds to 249-256 (LNPNLGGS). Residues 257–279 (WRKLGLITGAWSVVLNPLVTGYL) form a helical membrane-spanning segment. Residues 280-300 (GRGPGLKTVCAARTQGSTSQK) are Cytoplasmic-facing.

This sequence belongs to the G-protein coupled receptor 1 family.

It localises to the cell membrane. Functionally, G-protein coupled receptor for medium and long chain saturated and unsaturated fatty acids that plays an important role in glucose homeostasis. Fatty acid binding increases glucose-stimulated insulin secretion, and may also enhance the secretion of glucagon-like peptide 1 (GLP-1). May also play a role in bone homeostasis; receptor signaling activates pathways that inhibit osteoclast differentiation. Ligand binding leads to a conformation change that triggers signaling via G-proteins that activate phospholipase C, leading to an increase of the intracellular calcium concentration. Seems to act through a G(q) and G(i)-mediated pathway. Mediates the anti-inflammatory effects of omega-3 polyunsaturated fatty acids (PUFAs) via inhibition of NLRP3 inflammasome activation. In Macaca fascicularis (Crab-eating macaque), this protein is Free fatty acid receptor 1 (FFAR1).